Consider the following 87-residue polypeptide: Small ribosomal subunit protein uS17 (87 aa).

It belongs to the universal ribosomal protein uS17 family. In terms of assembly, part of the 30S ribosomal subunit.

Its function is as follows. One of the primary rRNA binding proteins, it binds specifically to the 5'-end of 16S ribosomal RNA. The sequence is that of Small ribosomal subunit protein uS17 from Staphylococcus aureus (strain JH1).